The following is a 340-amino-acid chain: Protein AC11 (340 aa).

Plays an essential role in nucleocapsid egress from the host nucleus to form the budded virion (BV). Does not participate in nucleocapsid formation. In Autographa californica nuclear polyhedrosis virus (AcMNPV), this protein is Protein AC11.